The following is an 84-amino-acid chain: Small ribosomal subunit protein bS20 (84 aa).

Belongs to the bacterial ribosomal protein bS20 family.

In terms of biological role, binds directly to 16S ribosomal RNA. This is Small ribosomal subunit protein bS20 from Bacteroides thetaiotaomicron (strain ATCC 29148 / DSM 2079 / JCM 5827 / CCUG 10774 / NCTC 10582 / VPI-5482 / E50).